Here is a 546-residue protein sequence, read N- to C-terminus: Parathyroid hormone 2 receptor (546 aa).

The N-terminal stretch at 1-24 (MAWLETFTYICGWLILSSCLLVRA) is a signal peptide. The Extracellular segment spans residues 27–143 (DSDGTITIEE…GKQEFFESLY (117 aa)). 4 N-linked (GlcNAc...) asparagine glycosylation sites follow: Asn-51, Asn-106, Asn-116, and Asn-121. A helical membrane pass occupies residues 144–167 (ILYTVGYSISFGSLAVAILIIGYF). Residues 168 to 174 (RRLHCTR) are Cytoplasmic-facing. Residues 175–194 (NYIHLHLFVSFMLRAMSIFV) traverse the membrane as a helical segment. At 195–235 (KDRVAQAHLGVEALQSLVMQGDLQNFIGGPSVDKSQYVGCK) the chain is on the extracellular side. A helical transmembrane segment spans residues 236–258 (IAVVMFIYFLATNYYWILVEGLY). Over 259 to 273 (LHNLIFVSFFSDTKY) the chain is Cytoplasmic. Residues 274-295 (LWGFISIGWGFPAVFVVAWAVA) traverse the membrane as a helical segment. Topologically, residues 296-313 (RATLADTRCWELSAGDRW) are extracellular. A helical membrane pass occupies residues 314-334 (IYQAPILAAIGLNFILFLNTV). Residues 335-361 (RVLATKIWETNAVGHDMRKQYRKLAKS) lie on the Cytoplasmic side of the membrane. A helical membrane pass occupies residues 362–380 (TLVLVLVFGVHYIVFVCQP). At 381–391 (HSFSGLWWEIR) the chain is on the extracellular side. The chain crosses the membrane as a helical span at residues 392-414 (MHCELFFNSFQGFFVSIVYCYCN). The Cytoplasmic portion of the chain corresponds to 415-546 (GEVQAEVKKM…EGCKGETHPI (132 aa)). Positions 497 to 546 (SEQDCQTHSPPEETKEGHRRQGDDSPVMESSRPVAFTLDTEGCKGETHPI) are disordered. Basic and acidic residues-rich tracts occupy residues 506-519 (PPEETKEGHRRQGD) and 537-546 (EGCKGETHPI).

Belongs to the G-protein coupled receptor 2 family. As to quaternary structure, binds to TIPF39/TIP39.

Its subcellular location is the cell membrane. In terms of biological role, this is a specific receptor for parathyroid hormone. The activity of this receptor is mediated by G proteins which activate adenylyl cyclase. PTH2R may be responsible for PTH effects in a number of physiological systems. It may play a significant role in pancreatic function. PTH2R presence in neurons indicates that it may function as a neurotransmitter receptor. The polypeptide is Parathyroid hormone 2 receptor (Pth2r) (Mus musculus (Mouse)).